Consider the following 397-residue polypeptide: P-selectin glycoprotein ligand 1 (397 aa).

The signal sequence occupies residues 1-17; it reads MSPSFLVLLTILGPGNS. Positions 18-41 are excised as a propeptide; it reads LQLQDPWGHETKEAPGPVHLRERR. The Extracellular portion of the chain corresponds to 18 to 307; the sequence is LQLQDPWGHE…SSDLIPVKQC (290 aa). The residue at position 54 (Tyr-54) is a Sulfotyrosine. O-linked (GalNAc...) threonine glycosylation is present at Thr-58. N-linked (GlcNAc...) asparagine glycosylation is present at Asn-66. The disordered stretch occupies residues 89-261; sequence TSAGTSERAT…TMETASTESN (173 aa). Over residues 120–198 the composition is skewed to polar residues; that stretch reads STDSATQWSL…PMEAETSQPA (79 aa). Repeat copies occupy residues 126–135, 136–145, 146–155, 156–165, 166–175, 176–185, 186–195, 196–205, 206–215, and 216–225. The segment at 126 to 225 is 10 X 10 AA tandem repeats; sequence QWSLTSVETV…KPAPTEAETT (100 aa). The segment covering 236–261 has biased composition (polar residues); the sequence is LFTTSAATEVPSTEPTTMETASTESN. An N-linked (GlcNAc...) asparagine glycan is attached at Asn-261. A helical membrane pass occupies residues 308–328; sequence LLIILILASLATIFLVCTVVL. Residues 329-397 are Cytoplasmic-facing; the sequence is AVRLSRKTHM…DDLTLHSFLP (69 aa). The segment at 364 to 390 is disordered; the sequence is PVTANGGLPKVQDLKTEPSGDRDGDDL. Residues 375–390 are compositionally biased toward basic and acidic residues; the sequence is QDLKTEPSGDRDGDDL. Thr-391 bears the Phosphothreonine mark. Ser-394 bears the Phosphoserine mark.

In terms of assembly, homodimer; disulfide-linked. Interacts with P- and E-selectins, through their lectin/EGF domains. Interaction with P-selectin requires sialyl Lewis X glycan modification and tyrosine sulfation, probably on Tyr-54, for high affinity binding. Dimerization appears not to be required for P-selectin/SELP binding. Interacts with SNX20. Interacts with MSN and SYK; mediates SYK activation downstream of SELPLG. Interacts with HAVCR1. Post-translationally, displays complex, core-2, sialylated and fucosylated O-linked oligosaccharides, at least some of which appear to contain poly-N-acetyllactosamine with varying degrees of substitution. Mainly disialylated or neutral forms of the core-2 tetrasaccharide, Galbeta1--&gt;4GlcNAcbeta1--&gt;6(Galbeta1--&gt;3)GalNAcOH. The GlcN:GalN ratio is approximately 2:1 and the Man:Fuc ratio 3:5. Contains about 14% fucose with alpha-1,3 linkage present in two forms: One species is a disialylated, monofucosylated glycan, and the other, a monosialylated, trifucosylated glycan with a polylactosamine backbone. The fucosylated forms carry the Lewis antigen and are important for interaction with selectins and for functioning. No sulfated O-glycans. Some N-glycosylation. In terms of tissue distribution, highly expressed in blood, bone marrow, brain, adipose tissue, spleen, and thymus. Also expressed in heart, kidney, liver, muscle, ovary, and stomach.

It is found in the cell membrane. In terms of biological role, a SLe(x)-type proteoglycan, which through high affinity, calcium-dependent interactions with E- and P-selectins, mediates rapid rolling of leukocytes over vascular surfaces during the initial steps in inflammation. Critical for the initial leukocyte capture. This Mus musculus (Mouse) protein is P-selectin glycoprotein ligand 1 (Selplg).